Consider the following 308-residue polypeptide: Mycothiol acetyltransferase (308 aa).

1D-myo-inositol 2-(L-cysteinylamino)-2-deoxy-alpha-D-glucopyranoside is bound at residue glutamate 44. Acetyl-CoA is bound at residue 83 to 85 (AVV). The N-acetyltransferase domain occupies 161 to 308 (VRLRTYAGSA…DVAYGRPEGD (148 aa)). The 1D-myo-inositol 2-(L-cysteinylamino)-2-deoxy-alpha-D-glucopyranoside site is built by glutamate 188, lysine 230, and glutamate 238. Residues 242–244 (VGV) and 249–255 (QGRGLGR) each bind acetyl-CoA. Tyrosine 276 is a 1D-myo-inositol 2-(L-cysteinylamino)-2-deoxy-alpha-D-glucopyranoside binding site. Position 281–286 (281–286 (NTAALH)) interacts with acetyl-CoA.

Belongs to the acetyltransferase family. MshD subfamily. In terms of assembly, monomer.

It carries out the reaction 1D-myo-inositol 2-(L-cysteinylamino)-2-deoxy-alpha-D-glucopyranoside + acetyl-CoA = mycothiol + CoA + H(+). Functionally, catalyzes the transfer of acetyl from acetyl-CoA to desacetylmycothiol (Cys-GlcN-Ins) to form mycothiol. This is Mycothiol acetyltransferase from Gordonia bronchialis (strain ATCC 25592 / DSM 43247 / BCRC 13721 / JCM 3198 / KCTC 3076 / NBRC 16047 / NCTC 10667) (Rhodococcus bronchialis).